A 635-amino-acid polypeptide reads, in one-letter code: Dihydrolipoyllysine-residue acetyltransferase component of pyruvate dehydrogenase complex, mitochondrial (635 aa).

The 78-residue stretch at 83 to 160 (GKEITMPALS…EINKPIAIIV (78 aa)) folds into the Lipoyl-binding 1 domain. The residue at position 124 (K124) is an N6-lipoyllysine. The tract at residues 171–204 (KNYKPSSQASSTPVQEEAPKPKQEAPKKSTKTYP) is disordered. The segment covering 174–184 (KPSSQASSTPV) has biased composition (polar residues). The span at 187-197 (EAPKPKQEAPK) shows a compositional bias: basic and acidic residues. The region spanning 206–283 (HKVVGMPALS…QINQPVCIIV (78 aa)) is the Lipoyl-binding 2 domain. K247 bears the N6-lipoyllysine mark. Residues 295–338 (YSVEEQSSSSSSSSQESTPSSSSSSSQESTPSQSSSQQTTRKSG) are disordered. A compositionally biased stretch (low complexity) spans 298–334 (EEQSSSSSSSSQESTPSSSSSSSQESTPSQSSSQQTT). Residues 342 to 379 (FATPAARFEASSKGYDLSAINGTGPNNRILKADVLEFV) form the Peripheral subunit-binding (PSBD) domain. The disordered stretch occupies residues 382–413 (KQEVAQQQQQQTTTTTKKPTTPTSSGEFTDIP). Positions 387-404 (QQQQQQTTTTTKKPTTPT) are enriched in low complexity. Positions 403-635 (PTSSGEFTDI…YVENPIKLIL (233 aa)) are catalytic.

This sequence belongs to the 2-oxoacid dehydrogenase family. As to quaternary structure, 20 to 30 alpha(2)-beta(2) tetramers of E1 + 6 homodimers of E3 + 60 copies of E2. Requires (R)-lipoate as cofactor.

Its subcellular location is the mitochondrion matrix. It carries out the reaction N(6)-[(R)-dihydrolipoyl]-L-lysyl-[protein] + acetyl-CoA = N(6)-[(R)-S(8)-acetyldihydrolipoyl]-L-lysyl-[protein] + CoA. The pyruvate dehydrogenase complex catalyzes the overall conversion of pyruvate to acetyl-CoA and CO(2). It contains multiple copies of three enzymatic components: pyruvate dehydrogenase (E1), dihydrolipoamide acetyltransferase (E2) and lipoamide dehydrogenase (E3). The protein is Dihydrolipoyllysine-residue acetyltransferase component of pyruvate dehydrogenase complex, mitochondrial (pdhC) of Dictyostelium discoideum (Social amoeba).